The following is a 110-amino-acid chain: UPF0339 protein YegP (110 aa).

2 tandem repeats follow at residues 10 to 58 (SSDS…RYEK) and 61 to 109 (ASNG…VKDN).

It belongs to the UPF0339 family. Duplicated subfamily.

The chain is UPF0339 protein YegP (yegP) from Escherichia coli O157:H7.